The chain runs to 196 residues: MVKIGVLGLQGAVREHVKSVEASGAEAVVVKRIEQLEEIDGLILPGGESTTMRRLIDKYAFMEPLRTFAKSGKPMFGTCAGMILLAKTLIGYEEAHIGAMDITVERNAFGRQKDSFEAALSIKGVGEDFVGVFIRAPYVVNVADDVEVLSMHGERMVAVRQGPFLAASFHPELTDDHRVTAYFVEMVKEAKMKKVV.

47–49 (GES) serves as a coordination point for L-glutamine. C79 acts as the Nucleophile in catalysis. Residues R106 and 134-135 (IR) each bind L-glutamine. Residues H170 and E172 each act as charge relay system in the active site.

It belongs to the glutaminase PdxT/SNO family. In terms of assembly, in the presence of PdxS, forms a dodecamer of heterodimers. Only shows activity in the heterodimer.

The catalysed reaction is aldehydo-D-ribose 5-phosphate + D-glyceraldehyde 3-phosphate + L-glutamine = pyridoxal 5'-phosphate + L-glutamate + phosphate + 3 H2O + H(+). The enzyme catalyses L-glutamine + H2O = L-glutamate + NH4(+). It participates in cofactor biosynthesis; pyridoxal 5'-phosphate biosynthesis. Functionally, catalyzes the hydrolysis of glutamine to glutamate and ammonia as part of the biosynthesis of pyridoxal 5'-phosphate. The resulting ammonia molecule is channeled to the active site of PdxS. The polypeptide is Pyridoxal 5'-phosphate synthase subunit PdxT (Bacillus mycoides (strain KBAB4) (Bacillus weihenstephanensis)).